The following is a 114-amino-acid chain: C-X-C motif chemokine 6 (114 aa).

Residues 1-37 form the signal peptide; sequence MSLPSSRAARVPGPSGSLCALLALLLLLTPPGPLASA. Intrachain disulfides connect Cys-49–Cys-75 and Cys-51–Cys-91.

This sequence belongs to the intercrine alpha (chemokine CxC) family.

The protein resides in the secreted. In terms of biological role, chemotactic for neutrophil granulocytes. Signals through binding and activation of its receptors (CXCR1 and CXCR2). In addition to its chemotactic and angiogenic properties, it has strong antibacterial activity against Gram-positive and Gram-negative bacteria (90-fold-higher when compared to CXCL5 and CXCL7). The chain is C-X-C motif chemokine 6 (CXCL6) from Homo sapiens (Human).